Reading from the N-terminus, the 95-residue chain is Aspartyl/glutamyl-tRNA(Asn/Gln) amidotransferase subunit C (95 aa).

This sequence belongs to the GatC family. In terms of assembly, heterotrimer of A, B and C subunits.

It carries out the reaction L-glutamyl-tRNA(Gln) + L-glutamine + ATP + H2O = L-glutaminyl-tRNA(Gln) + L-glutamate + ADP + phosphate + H(+). The enzyme catalyses L-aspartyl-tRNA(Asn) + L-glutamine + ATP + H2O = L-asparaginyl-tRNA(Asn) + L-glutamate + ADP + phosphate + 2 H(+). Allows the formation of correctly charged Asn-tRNA(Asn) or Gln-tRNA(Gln) through the transamidation of misacylated Asp-tRNA(Asn) or Glu-tRNA(Gln) in organisms which lack either or both of asparaginyl-tRNA or glutaminyl-tRNA synthetases. The reaction takes place in the presence of glutamine and ATP through an activated phospho-Asp-tRNA(Asn) or phospho-Glu-tRNA(Gln). The protein is Aspartyl/glutamyl-tRNA(Asn/Gln) amidotransferase subunit C of Campylobacter fetus subsp. fetus (strain 82-40).